A 121-amino-acid polypeptide reads, in one-letter code: Large ribosomal subunit protein bL12 (121 aa).

Belongs to the bacterial ribosomal protein bL12 family. In terms of assembly, homodimer. Part of the ribosomal stalk of the 50S ribosomal subunit. Forms a multimeric L10(L12)X complex, where L10 forms an elongated spine to which 2 to 4 L12 dimers bind in a sequential fashion. Binds GTP-bound translation factors.

Its function is as follows. Forms part of the ribosomal stalk which helps the ribosome interact with GTP-bound translation factors. Is thus essential for accurate translation. The polypeptide is Large ribosomal subunit protein bL12 (Aeromonas hydrophila subsp. hydrophila (strain ATCC 7966 / DSM 30187 / BCRC 13018 / CCUG 14551 / JCM 1027 / KCTC 2358 / NCIMB 9240 / NCTC 8049)).